The following is a 277-amino-acid chain: Large ribosomal subunit protein uL2 (277 aa).

A disordered region spans residues 215–263 (LGRKPHQRGSAMNPVDHPHGGGEGRTGAGRVPVSPWGQPAKGLKTRKKR).

This sequence belongs to the universal ribosomal protein uL2 family. In terms of assembly, part of the 50S ribosomal subunit. Forms a bridge to the 30S subunit in the 70S ribosome.

Its function is as follows. One of the primary rRNA binding proteins. Required for association of the 30S and 50S subunits to form the 70S ribosome, for tRNA binding and peptide bond formation. It has been suggested to have peptidyltransferase activity; this is somewhat controversial. Makes several contacts with the 16S rRNA in the 70S ribosome. The chain is Large ribosomal subunit protein uL2 from Deinococcus geothermalis (strain DSM 11300 / CIP 105573 / AG-3a).